The chain runs to 197 residues: Signal peptidase complex catalytic subunit SEC11 (197 aa).

At 1 to 14 (MLSSLAPYMANPRQ) the chain is on the cytoplasmic side. The chain crosses the membrane as a helical; Signal-anchor for type II membrane protein span at residues 15–33 (TLTQVLNFALVLSTAFMLW). At 34 to 197 (KGLSVITNST…MGLMVVLQRE (164 aa)) the chain is on the lumenal side. Asn41 carries an N-linked (GlcNAc...) asparagine glycan. Catalysis depends on charge relay system residues Ser53 and His92. Over residues 102 to 115 (PGREDKKNVKKGGE) the composition is skewed to basic and acidic residues. A disordered region spans residues 102–134 (PGREDKKNVKKGGEEGEETSSTPSQKLLTKGDN). Asp139 (charge relay system) is an active-site residue. The interval 183-194 (VLLGFMGLMVVL) is C-terminal short (CTS) helix.

This sequence belongs to the peptidase S26B family. Component of the signal peptidase complex (SPC) composed of a catalytic subunit SEC11 and three accessory subunits SPC1, SPC2 and SPC3. The complex induces a local thinning of the ER membrane which is used to measure the length of the signal peptide (SP) h-region of protein substrates. This ensures the selectivity of the complex towards h-regions shorter than 18-20 amino acids. SPC associates with the translocon complex.

It localises to the endoplasmic reticulum membrane. It catalyses the reaction Cleavage of hydrophobic, N-terminal signal or leader sequences from secreted and periplasmic proteins.. Functionally, catalytic component of the signal peptidase complex (SPC) which catalyzes the cleavage of N-terminal signal sequences from nascent proteins as they are translocated into the lumen of the endoplasmic reticulum. Specifically cleaves N-terminal signal peptides that contain a hydrophobic alpha-helix (h-region) shorter than 18-20 amino acids. The polypeptide is Signal peptidase complex catalytic subunit SEC11 (SEC11) (Paracoccidioides brasiliensis (strain Pb18)).